The following is a 175-amino-acid chain: FOXL2 neighbor protein (175 aa).

Disordered stretches follow at residues Met1–Val39 and Ala70–Arg100.

The chain is FOXL2 neighbor protein (FOXL2NB) from Homo sapiens (Human).